A 293-amino-acid chain; its full sequence is Mitochondrial inner membrane protease atp23 (293 aa).

The disordered stretch occupies residues 1 to 51; the sequence is MSPAPTTSAGPASSGIPPSSLPTSTVTEDDTKPSSSSSKANDLLPRYLTND. Positions 8–22 are enriched in low complexity; that stretch reads SAGPASSGIPPSSLP. Histidine 190 lines the a divalent metal cation pocket. Residue glutamate 191 is part of the active site. Histidine 194 is a binding site for a divalent metal cation.

Belongs to the peptidase M76 family.

It localises to the mitochondrion inner membrane. In terms of biological role, has a dual role in the assembly of mitochondrial ATPase. Acts as a protease that removes N-terminal residues of mitochondrial ATPase CF(0) subunit 6 at the intermembrane space side. Also involved in the correct assembly of the membrane-embedded ATPase CF(0) particle, probably mediating association of subunit 6 with the subunit 9 ring. This is Mitochondrial inner membrane protease atp23 (atp23) from Neurospora crassa (strain ATCC 24698 / 74-OR23-1A / CBS 708.71 / DSM 1257 / FGSC 987).